The chain runs to 548 residues: Terpene synthase 1 (548 aa).

Residues Asp-301, Asp-305, Asp-445, and Glu-453 each coordinate Mg(2+). The DDXXD motif motif lies at 301–305; it reads DDTYD.

The protein belongs to the terpene synthase family. Tpsa subfamily. The cofactor is Mg(2+). Mn(2+) serves as cofactor.

It catalyses the reaction (2E,6E)-farnesyl diphosphate = (+)-valencene + diphosphate. The protein operates within secondary metabolite biosynthesis; terpenoid biosynthesis. Functionally, sesquiterpene synthase involved in the biosynthesis of volatile compounds which contribute to fruit flavor and aroma. Mediates the conversion of (2E,6E)-farnesyl diphosphate (FPP) into (+)-valencene. No activity detected with geranyl diphosphate (GPP). The chain is Terpene synthase 1 from Citrus sinensis (Sweet orange).